Consider the following 656-residue polypeptide: MYLSIIILPVLGSIVAGFFGRKLGVRGAQIITCSCVIVTTILALLAWVEVGFNNIPVTINLFRWIDSEWFNIIWGFQFDSLTVSMLLPVLIISSLVHIYSISYMSGDPHNQRFFSYLSLFTFMMIILVTGNNYLLMFVGWEGVGVCSYLLVSFWFTRIAANQSSISAFLTNRVGDCFLTIGMFAILWSLGNLDYATVFSLAPYINENIITIIGICLVIGAMAKSSQVGLHVWLPMAMEGPTPVSALIHAATMVTAGVYLLMRSSPLIEYSSTVLLICLWLGAITTVFSSLVGLFQQDIKKVIAYSTMSQLGLMVVAIGLSSYNIALFHLVNHAFYKAALFLGAGSIIHAVADNQDFRKYGGLREFLPLTYSIILIASLSLAAFPFLTGFYSKDLILESAFGQFTFSGVSVYAISTIGAIFTTLYSVKVIYLTFLANPNGSLMTVRHAHEGDIFLTLPLVILAIFSIFFGYLTKDIFIGLGSSFFVDNSLYVHPVHEILIDTEFGVPTVFKILPFIFTVLFSILAILLSEFIPGSVFNFKLSRFGYNLFGFFNQRFLIEMFYNNYITNLVLTLGSQTTKVLDKGSVELIGPFGLEKGLMNFSKSLTKLSTGVVTSYALYILLGLISFIIILYLSQISSSLIVLLIILTLFSLNFNKQ.

Transmembrane regions (helical) follow at residues 5-23 (IIIL…GRKL), 30-52 (IITC…EVGF), 81-103 (LTVS…SISY), 112-129 (RFFS…ILVT), 133-155 (YLLM…SFWF), 168-190 (FLTN…WSLG), 200-222 (LAPY…GAMA), 243-262 (VSAL…LLMR), 272-294 (TVLL…VGLF), 301-320 (VIAY…IGLS), 324-346 (IALF…AGSI), 367-389 (PLTY…LTGF), 409-431 (SVYA…VIYL), 452-471 (IFLT…FGYL), 514-536 (FIFT…GSVF), 607-629 (LSTG…FIII), and 634-653 (QISS…SLNF).

This sequence belongs to the complex I subunit 5 family.

It localises to the mitochondrion inner membrane. It carries out the reaction a ubiquinone + NADH + 5 H(+)(in) = a ubiquinol + NAD(+) + 4 H(+)(out). Its function is as follows. Core subunit of the mitochondrial membrane respiratory chain NADH dehydrogenase (Complex I) that is believed to belong to the minimal assembly required for catalysis. Complex I functions in the transfer of electrons from NADH to the respiratory chain. The immediate electron acceptor for the enzyme is believed to be ubiquinone. The polypeptide is NADH-ubiquinone oxidoreductase chain 5 (ND5) (Cryphonectria parasitica (Chestnut blight fungus)).